The chain runs to 153 residues: ORM1-like protein 3 (153 aa).

Positions 1-17 are important for ceramide level-sensing; it reads MNVGTAHSEVNPNTRVM. Over 1–21 the chain is Cytoplasmic; sequence MNVGTAHSEVNPNTRVMNSRG. The next 2 membrane-spanning stretches (helical) occupy residues 22 to 44 and 45 to 63; these read IWLS…PFVS and VPVV…MYIF. At 64-100 the chain is on the cytoplasmic side; that stretch reads LHTVKGTPFETPDQGKARLLTHWEQMDYGVQFTASRK. Residues 101–117 traverse the membrane as a helical segment; sequence FLTITPIVLYFLTSFYT. Residues 118 to 121 are Lumenal-facing; the sequence is KYDQ. Residues 122–139 form a helical membrane-spanning segment; that stretch reads IHFVLNTVSLMSVLIPKL. Residue Pro-137 is modified to Hydroxyproline. Over 140–153 the chain is Cytoplasmic; sequence PQLHGVRIFGINKY.

This sequence belongs to the ORM family. Ceramide-sensitive subunit of the serine palmitoyltransferase (SPT) complex, which is also composed of SPTLC1, SPTLC2/3 and SPTSSA/B. In terms of processing, when hydroxylated at Pro-137, ubiquitinated via 'Lys-48'-linkage, leading to proteasomal degradation. In endothelial cells, ORMDL3 proteasomal degradation is controlled by the sphingosine 1-phosphate receptor signaling pathway. As to expression, widely expressed. Expressed in adult and fetal heart, brain, lung, liver, skeletal muscle and kidney. Expressed in adult pancreas and placenta and in fetal spleen and thymus.

Its subcellular location is the endoplasmic reticulum membrane. Plays an essential role in the homeostatic regulation of sphingolipid de novo biosynthesis by modulating the activity of the serine palmitoyltransferase (SPT) in response to ceramide levels. When complexed to SPT, the binding of ceramides to its N-terminus stabilizes a conformation that block SPT substrate entry, hence preventing SPT catalytic activity. Through this mechanism, maintains ceramide levels at sufficient concentrations for the production of complex sphingolipids, but which prevents the accumulation of ceramides to levels that trigger apoptosis. The polypeptide is ORM1-like protein 3 (ORMDL3) (Homo sapiens (Human)).